The primary structure comprises 180 residues: Large ribosomal subunit protein uL5 (180 aa).

Belongs to the universal ribosomal protein uL5 family. In terms of assembly, part of the 50S ribosomal subunit; part of the 5S rRNA/L5/L18/L25 subcomplex. Contacts the 5S rRNA and the P site tRNA. Forms a bridge to the 30S subunit in the 70S ribosome.

This is one of the proteins that bind and probably mediate the attachment of the 5S RNA into the large ribosomal subunit, where it forms part of the central protuberance. In the 70S ribosome it contacts protein S13 of the 30S subunit (bridge B1b), connecting the 2 subunits; this bridge is implicated in subunit movement. Contacts the P site tRNA; the 5S rRNA and some of its associated proteins might help stabilize positioning of ribosome-bound tRNAs. The polypeptide is Large ribosomal subunit protein uL5 (Streptococcus pyogenes serotype M1).